The sequence spans 113 residues: UPF0482 protein YnfB (113 aa).

The signal sequence occupies residues 1–28; sequence MKITLSKRIGLLAFLLPCALALSTTVHA.

The protein belongs to the UPF0482 family.

The sequence is that of UPF0482 protein YnfB from Escherichia coli O127:H6 (strain E2348/69 / EPEC).